The primary structure comprises 367 residues: snRNA-activating protein complex subunit 1 (367 aa).

Residues 1 to 168 are SNAPC3-binding; the sequence is MGTPPGLQTD…EEFKDPSDRV (168 aa). The SNAPC4-binding stretch occupies residues 164–268; sequence PSDRVMKLIT…AESLAKIKSK (105 aa). 2 disordered regions span residues 228–254 and 278–367; these read KDRK…QETE and KSRR…KRKH. Residues 238-254 are compositionally biased toward basic and acidic residues; that stretch reads KINDGEEKMEGNSQETE. 2 positions are modified to phosphoserine: S289 and S290. The segment covering 292-301 has biased composition (polar residues); sequence CDSASGQGQV.

As to quaternary structure, part of the SNAPc complex composed of 5 subunits: SNAPC1, SNAPC2, SNAPC3, SNAPC4 and SNAPC5. SNAPC1 interacts with SNAPC3, SNAPC4 and TBP.

Its subcellular location is the nucleus. Functionally, part of the SNAPc complex required for the transcription of both RNA polymerase II and III small-nuclear RNA genes. Binds to the proximal sequence element (PSE), a non-TATA-box basal promoter element common to these 2 types of genes. Recruits TBP and BRF2 to the U6 snRNA TATA box. This Macaca fascicularis (Crab-eating macaque) protein is snRNA-activating protein complex subunit 1 (SNAPC1).